We begin with the raw amino-acid sequence, 785 residues long: AP-1 complex subunit gamma-like 2 (785 aa).

The segment at 369-379 (LSLALVNSSNV) is essential for ubiquitin-binding. The segment at 592-617 (GPQADEEAKESKEAAQLSEAAPVPTE) is disordered. Residues 665-780 (APIPDLKVFE…QEIFEVNNLP (116 aa)) enclose the GAE domain.

It belongs to the adaptor complexes large subunit family. May interact with AP1S1/Sigma1A-adaptin and AP1S2/Sigma1B-adaptin. Probably does not interact with APB1. Interacts (via GAE domain) with RABEP1, NECAP1, CLINT1 and AFTPH/aftiphilin. In terms of assembly, (Microbial infection) Interacts with HBV major surface antigen L. Interacts with HBV core protein C in a ubiquitin-dependent manner. Expressed in all but one (skeletal muscle) tissues examined.

The protein localises to the golgi apparatus membrane. Its subcellular location is the cytoplasmic vesicle membrane. The protein resides in the endosome membrane. Functionally, may function in protein sorting in late endosomes or multivesucular bodies (MVBs). Its function is as follows. (Microbial infection) Involved in MVB-assisted maturation of hepatitis B virus (HBV). The polypeptide is AP-1 complex subunit gamma-like 2 (AP1G2) (Homo sapiens (Human)).